We begin with the raw amino-acid sequence, 238 residues long: 1-(5-phosphoribosyl)-5-[(5-phosphoribosylamino)methylideneamino] imidazole-4-carboxamide isomerase (238 aa).

The active-site Proton acceptor is the Asp-8. Asp-129 serves as the catalytic Proton donor.

This sequence belongs to the HisA/HisF family.

It is found in the cytoplasm. It carries out the reaction 1-(5-phospho-beta-D-ribosyl)-5-[(5-phospho-beta-D-ribosylamino)methylideneamino]imidazole-4-carboxamide = 5-[(5-phospho-1-deoxy-D-ribulos-1-ylimino)methylamino]-1-(5-phospho-beta-D-ribosyl)imidazole-4-carboxamide. It participates in amino-acid biosynthesis; L-histidine biosynthesis; L-histidine from 5-phospho-alpha-D-ribose 1-diphosphate: step 4/9. This chain is 1-(5-phosphoribosyl)-5-[(5-phosphoribosylamino)methylideneamino] imidazole-4-carboxamide isomerase, found in Lacticaseibacillus casei (strain BL23) (Lactobacillus casei).